The primary structure comprises 291 residues: Probable endonuclease 4 (291 aa).

Zn(2+) is bound by residues His72, His112, Glu147, Asp181, His184, His215, Asp228, His230, and Glu260.

Belongs to the AP endonuclease 2 family. It depends on Zn(2+) as a cofactor.

The catalysed reaction is Endonucleolytic cleavage to 5'-phosphooligonucleotide end-products.. Functionally, endonuclease IV plays a role in DNA repair. It cleaves phosphodiester bonds at apurinic or apyrimidinic (AP) sites, generating a 3'-hydroxyl group and a 5'-terminal sugar phosphate. The protein is Probable endonuclease 4 of Mycoplasma genitalium (strain ATCC 33530 / DSM 19775 / NCTC 10195 / G37) (Mycoplasmoides genitalium).